The following is a 1309-amino-acid chain: MGAASGCRWPWPPLLPLLLMLLLPPPPLPVALALDSALQPGNFTADEAGAEDFAQSFNSSSEQVLFQSTAASWAHDTNITEENARRQEEAALISQEFSEVWGQKAKALYDPIWQNFTSRTLRRIIGVVRTLGSANLSPAKRQQYNSLLSNMTRIYSTAKVCFPNKTATCWSLDPELTNILATSRSYTLLLYAWEGWHNAAGIPLKPLYQDFTALSNEAYKQDGFSDTGAYWRSLYDSPTFTEDLERLYHQLEPLYLNLHAYVRRALHRQYGDRFINLRGPIPAHLLGNMWAQSWNNIYDMVVPFPGKPSLDVTSAMVQKGWNVTHMFRVAEEFFTSLGLLPMPPEFWAESMLEKPSDGREVVCHASAWDFYNRKDFRIKQCTQVTMDQLSTVHHEMGHVQYYLQYKDQHVSLRRGANPGFHEAIGDVLALSVSTPAHLHKIGLLDHVTSDWESDINYLLKMALEKIAFLPFGYLVDQWRWGVFSGRTPPLYNYDWWYLRTKYQGVCPPVVRNETHFDAGAKYHVPNVTPYIRYFVSFILQFQFHQALCKEAGHQGPLHQCDIYQSTRAGAKLRAVLQAGSSRPWQEVLKDMVGSGALDAQPLLDYFQPVTQWLEEQNQRSGDILGWPEYQWRPPMPDNYPEGIDLVSDEAEASKFVEEYDRRSQVVLNEYAEANWDYNTNITAEGSKRVLEKSTQMANHTVKYGIWARKFDVANIQNFTLKRMIKKIQDLERAALPFKELEEYNQILLDMETAYSVASVCHANSTCLQLEPDLTNLMATSRSYEELLWAWKGWRDKVGRAILPYFPKYVELTNKAARLNGYEDGGDAWRAAYEMPFLEQELEQLFQELQPLYLNLHAYVRRALHHHYGPEHINLEGPIPAHLLGNMWAQTWSNIYDLVVPFPSASKMDASEAMINQGWTPQRMFKEADNFFTSLGLLPVPPEFWNKSMLEKPTDGREVVCHASAWDFFNGKDFRIKQCTTVNMEDLVVAHHEMGHIQYFMQYKDLPVTFREGANPGFHEAIGDVLALSVSTPKHLRSINLLKSEDDGYEEDINFLMKMALDKVAFVPFSYLVDQWRWRVFDRSITKENYNQEWWSLRLKYQGLCPPVARSQGDFDPGAKFHIPSSVPYIRYFVSFIIQFQFHEALCQAAGHKGPLHKCDIYQSKEAGRRLADAMKLGLSKPWPEAMQLITGQPNVSASAMMTYFKPLLDWLVTENGRHGEKLGWPQYNWTPNSARLEGSFAGTGRVNFLGLNLEEQQARVGQWVLLFLGVTLLVATMGLTQRLFSIRHQILRRTHRGPQFGSEVELRHS.

The first 33 residues, 1–33 (MGAASGCRWPWPPLLPLLLMLLLPPPPLPVALA), serve as a signal peptide directing secretion. The Extracellular segment spans residues 34–1259 (LDSALQPGNF…GLNLEEQQAR (1226 aa)). N42, N58, N78, N115, N135, N150, and N164 each carry an N-linked (GlcNAc...) asparagine glycan. Peptidase M2 domains follow at residues 44 to 627 (TADE…LGWP) and 646 to 1225 (VSDE…LGWP). A disulfide bridge connects residues C161 and C169. Position 235 (Y235) interacts with chloride. N322 carries N-linked (GlcNAc...) asparagine glycosylation. An intrachain disulfide couples C363 to C381. H394 is a binding site for Zn(2+). The Proton acceptor 1 role is filled by E395. H398 and E422 together coordinate Zn(2+). An N-linked (GlcNAc...) asparagine glycan is attached at N512. Residue H523 is the Proton donor 1 of the active site. N526 carries an N-linked (GlcNAc...) asparagine glycan. Residue R532 participates in chloride binding. A disulfide bond links C548 and C560. 4 N-linked (GlcNAc...) asparagine glycosylation sites follow: N680, N698, N717, and N763. Residues C760 and C766 are joined by a disulfide bond. The chloride site is built by R794 and Y832. The N-linked (GlcNAc...) asparagine glycan is linked to N945. C960 and C978 are joined by a disulfide. H991 serves as a coordination point for Zn(2+). The Proton acceptor 2 role is filled by E992. 2 residues coordinate Zn(2+): H995 and E1019. Chloride is bound by residues W1093 and R1097. The active-site Proton donor 2 is the H1121. Position 1130 (R1130) interacts with chloride. C1146 and C1158 are oxidised to a cystine. Residues N1194 and N1228 are each glycosylated (N-linked (GlcNAc...) asparagine). The tract at residues 1218-1259 (HGEKLGWPQYNWTPNSARLEGSFAGTGRVNFLGLNLEEQQAR) is juxtamembrane stalk. Residues 1260–1280 (VGQWVLLFLGVTLLVATMGLT) traverse the membrane as a helical segment. The Cytoplasmic portion of the chain corresponds to 1281–1309 (QRLFSIRHQILRRTHRGPQFGSEVELRHS). Residue S1302 is modified to Phosphoserine.

This sequence belongs to the peptidase M2 family. Monomer and homodimer; homodimerizes following binding to an inhibitor. Interacts with calmodulin (CALM1, CALM2 or CALM3); interaction takes place in the cytoplasmic region and regulates phosphorylation and proteolytic cleavage. It depends on Zn(2+) as a cofactor. Chloride is required as a cofactor. Post-translationally, produced following proteolytic cleavage by secretase enzymes that cleave the transmembrane form in the juxtamembrane stalk region upstream of the transmembrane region. Cleavage can take place at different sites of the juxtamembrane stalk region. Phosphorylated by CK2 on Ser-1302; which allows membrane retention. Phosphorylated on tyrosine residues on its extracellular part, promoting cleavage by secretase enzymes and formation of the soluble form (Angiotensin-converting enzyme, soluble form).

Its subcellular location is the cell membrane. It localises to the cytoplasm. The protein resides in the secreted. The catalysed reaction is Release of a C-terminal dipeptide, oligopeptide-|-Xaa-Yaa, when Xaa is not Pro, and Yaa is neither Asp nor Glu. Thus, conversion of angiotensin I to angiotensin II, with increase in vasoconstrictor activity, but no action on angiotensin II.. The enzyme catalyses angiotensin I + H2O = L-histidyl-L-leucine + angiotensin II. It carries out the reaction bradykinin + H2O = L-Phe-L-Arg + bradykinin(1-7). It catalyses the reaction substance P + H2O = substance P(1-9) + L-Leu-L-Met-NH2. The catalysed reaction is substance P + H2O = substance P(1-8) + Gly-L-Leu-L-Met-NH2. The enzyme catalyses substance P + H2O = L-Phe-L-Phe-Gly-L-Leu-L-Met-NH2 + substance P(1-6). It carries out the reaction neurotensin + H2O = neurotensin(1-11) + L-isoleucyl-L-leucine. It catalyses the reaction goralatide + H2O = N-acetyl-L-seryl-L-aspartate + L-lysyl-L-proline. The catalysed reaction is Met-enkephalin + H2O = L-phenylalanyl-L-methionine + L-tyrosylglycylglycine. The enzyme catalyses Leu-enkephalin + H2O = L-tyrosylglycylglycine + L-phenylalanyl-L-leucine. It carries out the reaction Met-enkephalin-Arg-Phe + H2O = L-arginyl-L-phenylalanine + Met-enkephalin. The dipeptidyl carboxypeptidase activity is strongly activated by chloride. The dipeptidyl carboxypeptidase activity is specifically inhibited by lisinopril, captopril and enalaprilat. Functionally, dipeptidyl carboxypeptidase that removes dipeptides from the C-terminus of a variety of circulating hormones, such as angiotensin I, bradykinin or enkephalins, thereby playing a key role in the regulation of blood pressure, electrolyte homeostasis or synaptic plasticity. Composed of two similar catalytic domains, each possessing a functional active site, with different selectivity for substrates. Plays a major role in the angiotensin-renin system that regulates blood pressure and sodium retention by the kidney by converting angiotensin I to angiotensin II, resulting in an increase of the vasoconstrictor activity of angiotensin. Also able to inactivate bradykinin, a potent vasodilator, and therefore enhance the blood pressure response. Acts as a regulator of synaptic transmission by mediating cleavage of neuropeptide hormones, such as substance P, neurotensin or enkephalins. Catalyzes degradation of different enkephalin neuropeptides (Met-enkephalin, Leu-enkephalin, Met-enkephalin-Arg-Phe and possibly Met-enkephalin-Arg-Gly-Leu). Acts as a regulator of synaptic plasticity in the nucleus accumbens of the brain by mediating cleavage of Met-enkephalin-Arg-Phe, a strong ligand of Mu-type opioid receptor OPRM1, into Met-enkephalin. Met-enkephalin-Arg-Phe cleavage by ACE decreases activation of OPRM1, leading to long-term synaptic potentiation of glutamate release. Also acts as a regulator of hematopoietic stem cell differentiation by mediating degradation of hemoregulatory peptide N-acetyl-SDKP (AcSDKP). Acts as a regulator of cannabinoid signaling pathway by mediating degradation of hemopressin, an antagonist peptide of the cannabinoid receptor CNR1. Involved in amyloid-beta metabolism by catalyzing degradation of Amyloid-beta protein 40 and Amyloid-beta protein 42 peptides, thereby preventing plaque formation. Catalyzes cleavage of cholecystokinin (maturation of Cholecystokinin-8 and Cholecystokinin-5) and Gonadoliberin-1 (both maturation and degradation) hormones. Degradation of hemoregulatory peptide N-acetyl-SDKP (AcSDKP) and amyloid-beta proteins is mediated by the N-terminal catalytic domain, while angiotensin I and cholecystokinin cleavage is mediated by the C-terminal catalytic region. In terms of biological role, soluble form that is released in blood plasma and other body fluids following proteolytic cleavage in the juxtamembrane stalk region. The sequence is that of Angiotensin-converting enzyme from Sus scrofa (Pig).